We begin with the raw amino-acid sequence, 349 residues long: Sphingolipid C4-hydroxylase SUR2 (349 aa).

5 helical membrane passes run 9–29, 50–70, 99–119, 148–168, and 209–229; these read AAGS…MHYA, VLAL…FHVI, FLEV…FMHF, IYYG…FLFV, and PVEG…LTHL. A Fatty acid hydroxylase domain is found at 162 to 297; the sequence is FAGFLFVDTW…FTFWDNLFQT (136 aa).

It belongs to the sterol desaturase family.

The protein resides in the endoplasmic reticulum membrane. It catalyses the reaction sphinganine + 2 Fe(II)-[cytochrome b5] + O2 + 2 H(+) = (4R)-hydroxysphinganine + 2 Fe(III)-[cytochrome b5] + H2O. It carries out the reaction an N-acylsphinganine + 2 Fe(II)-[cytochrome b5] + O2 + 2 H(+) = an N-acyl-(4R)-4-hydroxysphinganine + 2 Fe(III)-[cytochrome b5] + H2O. The catalysed reaction is an N-acyleicosasphinganine + 2 Fe(II)-[cytochrome b5] + O2 + 2 H(+) = N-acyl-4-hydroxyeicosasphinganine + 2 Fe(III)-[cytochrome b5] + H2O. It participates in membrane lipid metabolism; sphingolipid biosynthesis. Its function is as follows. Required for hydroxylation of C-4 in the sphingoid moiety of ceramide. Catalyzes the conversion of sphinganine to phytosphingosine in sphingolipid biosynthesis. Involved in the response to syringomycin. The protein is Sphingolipid C4-hydroxylase SUR2 (SUR2) of Saccharomyces cerevisiae (strain ATCC 204508 / S288c) (Baker's yeast).